A 582-amino-acid chain; its full sequence is Transcription factor PCF5 (582 aa).

Disordered regions lie at residues 30 to 78 and 123 to 195; these read AAGK…QHDH and SPMG…GGGG. Residues 51–64 are compositionally biased toward gly residues; the sequence is GGDGGGVGGGGSGG. In terms of domain architecture, TCP spans 213–271; the sequence is RKDRHSKVCTARGPRDRRVRLSAHTAIQFYDVQDRLGYDRPSKAVDWLIKNAKDAIDKL. 3 disordered regions span residues 283 to 306, 402 to 423, and 548 to 582; these read GAGA…ENSD, MFHH…TTQQ, and RLPA…ASHH.

In terms of assembly, forms homodimers and heterodimers with PCF2.

It localises to the nucleus. Transcription activator. Binds the promoter core sequence 5'-GGNCC-3'. The protein is Transcription factor PCF5 (PCF5) of Oryza sativa subsp. indica (Rice).